An 863-amino-acid chain; its full sequence is uncharacterized protein (863 aa).

Residues 1-29 (MHQSGSVSLCRSAISVLVATALYSPIALA) form the signal peptide. The Autotransporter domain maps to 595–863 (GVSYDTAMWS…NTQAGVVWTF (269 aa)).

It is found in the cell outer membrane. This is an uncharacterized protein from Escherichia coli (strain K12).